Reading from the N-terminus, the 512-residue chain is GMP synthase [glutamine-hydrolyzing] (512 aa).

In terms of domain architecture, Glutamine amidotransferase type-1 spans 3–196; that stretch reads NILILDFGSQ…VKHICQTSET (194 aa). The active-site Nucleophile is the Cys80. Active-site residues include His169 and Glu171. A GMPS ATP-PPase domain is found at 197–387; sequence WKIETIEKQL…LGLPDVLISR (191 aa). An ATP-binding site is contributed by 225–231; the sequence is SGGVDSS.

Homodimer.

The catalysed reaction is XMP + L-glutamine + ATP + H2O = GMP + L-glutamate + AMP + diphosphate + 2 H(+). Its pathway is purine metabolism; GMP biosynthesis; GMP from XMP (L-Gln route): step 1/1. Its function is as follows. Catalyzes the synthesis of GMP from XMP. The sequence is that of GMP synthase [glutamine-hydrolyzing] (guaA) from Chlamydia muridarum (strain MoPn / Nigg).